Reading from the N-terminus, the 397-residue chain is CCA-adding enzyme (397 aa).

Positions 26 and 29 each coordinate ATP. Residues glycine 26 and arginine 29 each coordinate CTP. Mg(2+) contacts are provided by aspartate 39 and aspartate 41. 5 residues coordinate ATP: arginine 110, aspartate 153, arginine 156, arginine 159, and arginine 162. Residues arginine 110, aspartate 153, arginine 156, arginine 159, and arginine 162 each coordinate CTP.

It belongs to the tRNA nucleotidyltransferase/poly(A) polymerase family. Bacterial CCA-adding enzyme type 3 subfamily. In terms of assembly, homodimer. Requires Mg(2+) as cofactor.

The enzyme catalyses a tRNA precursor + 2 CTP + ATP = a tRNA with a 3' CCA end + 3 diphosphate. It carries out the reaction a tRNA with a 3' CCA end + 2 CTP + ATP = a tRNA with a 3' CCACCA end + 3 diphosphate. Catalyzes the addition and repair of the essential 3'-terminal CCA sequence in tRNAs without using a nucleic acid template. Adds these three nucleotides in the order of C, C, and A to the tRNA nucleotide-73, using CTP and ATP as substrates and producing inorganic pyrophosphate. tRNA 3'-terminal CCA addition is required both for tRNA processing and repair. Also involved in tRNA surveillance by mediating tandem CCA addition to generate a CCACCA at the 3' terminus of unstable tRNAs. While stable tRNAs receive only 3'-terminal CCA, unstable tRNAs are marked with CCACCA and rapidly degraded. The sequence is that of CCA-adding enzyme from Bacillus cereus (strain 03BB102).